Reading from the N-terminus, the 123-residue chain is CD59A glycoprotein (123 aa).

The N-terminal stretch at 1–23 (MRAQRGLILLLLLLAVFCSTAVS) is a signal peptide. The 73-residue stretch at 24–96 (LTCYHCFQPV…CCQFNLCNKS (73 aa)) folds into the UPAR/Ly6 domain. 5 cysteine pairs are disulfide-bonded: cysteine 26–cysteine 50, cysteine 29–cysteine 37, cysteine 43–cysteine 63, cysteine 69–cysteine 87, and cysteine 88–cysteine 93. An N-linked (GlcNAc...) asparagine glycan is attached at asparagine 40. A glycan (N-linked (GlcNAc...) asparagine) is linked at asparagine 94. Residues 97–123 (DGSLGKTPLLGTSVLVAILNLCFLSHL) constitute a propeptide, removed in mature form.

Interacts with T-cell surface antigen CD2. N- and O-glycosylated. In terms of tissue distribution, expressed in all tissues examined (liver, kidney, spleen, thymus, brain and heart). Low levels in thymus. Also expressed in mononuclear cells, erythrocytes and platelets. Barely detected in neutrophils.

Its subcellular location is the cell membrane. It is found in the secreted. In terms of biological role, potent inhibitor of the complement membrane attack complex (MAC) action, which protects self-cells from damage during complement activation. Acts by binding to the beta-haipins of C8 (C8A and C8B) components of the assembling MAC, forming an intermolecular beta-sheet that prevents incorporation of the multiple copies of C9 required for complete formation of the osmolytic pore. The protein is CD59A glycoprotein of Mus musculus (Mouse).